A 695-amino-acid polypeptide reads, in one-letter code: Testis-specific Y-encoded-like protein 2 (695 aa).

The disordered stretch occupies residues 1–56 (MDRPDEGPPAKTRRLSSSESPQRDPPPPPPPPPLLRLPLPPPQQRPRLQEETEAAQ). Residue lysine 11 forms a Glycyl lysine isopeptide (Lys-Gly) (interchain with G-Cter in SUMO2) linkage. Residues serine 18 and serine 20 each carry the phosphoserine modification. Positions 23-44 (RDPPPPPPPPPLLRLPLPPPQQ) are enriched in pro residues. Glycyl lysine isopeptide (Lys-Gly) (interchain with G-Cter in SUMO2) cross-links involve residues lysine 163 and lysine 165. Residues 175–207 (EDEDEQESMRSSRRRRRRRRRKQRKVKRESRQR) form a disordered region. The span at 185-202 (SSRRRRRRRRRKQRKVKR) shows a compositional bias: basic residues. At threonine 340 the chain carries Phosphothreonine. Disordered regions lie at residues 471–603 (DINE…RDIE) and 632–695 (VEEE…GKTG). The span at 481-491 (SPDHDEVRNET) shows a compositional bias: basic and acidic residues. Positions 496-518 (ESADDNETTDNNESADDNNENPE) are enriched in acidic residues. A compositionally biased stretch (basic and acidic residues) spans 519-535 (DNNKNADDNKENPDNNK). A compositionally biased stretch (low complexity) spans 539 to 557 (GNNFFNGGFWGSHGNNQDS). Composition is skewed to acidic residues over residues 558–601 (SDSD…DDRD) and 632–677 (VEEE…DLED). A phosphoserine mark is found at serine 670 and serine 673.

It belongs to the nucleosome assembly protein (NAP) family. As to quaternary structure, interacts with histones. Interacts with CASK. Part of a complex containing CASK, TBR1 and TSPYL2. Post-translationally, phosphorylation at Ser-20 and/or Thr-340 impairs function on cell proliferation. Ubiquitously expressed, with highest levels in testis, adrenal gland, cerebral cortex, ovary, skeletal muscle and spleen. Present in testis, adrenal gland, cerebral cortex and ovary (at protein level).

Its subcellular location is the nucleus. The protein resides in the cytoplasm. Its function is as follows. Part of the CASK/TBR1/TSPYL2 transcriptional complex which modulates gene expression in response to neuronal synaptic activity, probably by facilitating nucleosome assembly. May inhibit cell proliferation by inducing p53-dependent CDKN1A expression. This chain is Testis-specific Y-encoded-like protein 2 (TSPYL2), found in Macaca fascicularis (Crab-eating macaque).